The primary structure comprises 557 residues: MTSSSRGYQRVDSSGDGGSLLMEEEGDNPHEALLHRNNDDYASTYHHVGVEYDSYEELERHEMDDRVTEIPEGFHRRQRRNLIYGDDVATDEELRVLRREALFGEEVTRAGLGRAEYYEDSHLIHSCDKSGHEDIDDESDDESKDEDEEEEETGIRKFAKLVLPHVALVLLTCTYTVIGALIFYSVEQPHEQMMKEQQLKLIYTRQNEFVDDLIRLAAGNETKRYEWESLAERHMHNMSDQLFVAFEKYFLTSNEVKKNAATETWTFSSSIFFAVTVVTTIGYGNPVPVTNIGRIWCILFSLLGIPLTLVTIADLGKFLSEHLVWLYGNYLKLKYLILSRHRKERREHVCEHCHSHGMGHDMNIEEKRIPAFLVLAILIVYTAFGGVLMSKLEPWSFFTSFYWSFITMTTVGFGDLMPRRDGYMYIILLYIILGLAITTMCIDLVGVQYIRKIHYFGRKIQDARSALAVVGGKVVLVSELYANLMQKRARNMSREAFIVENLYVSKHIIPFIPTDIRCIRYIDQTADAATISTSSSAIDMQSCRFCHSRYSLNRAFK.

2 disordered regions span residues 1-34 and 128-151; these read MTSS…EALL and DKSG…EEEE. Over 1–165 the chain is Cytoplasmic; it reads MTSSSRGYQR…RKFAKLVLPH (165 aa). Positions 134 to 151 are enriched in acidic residues; it reads DIDDESDDESKDEDEEEE. Residues 166 to 186 traverse the membrane as a helical segment; it reads VALVLLTCTYTVIGALIFYSV. N-linked (GlcNAc...) asparagine glycosylation is found at Asn-220 and Asn-237. The segment at residues 270 to 290 is an intramembrane region (pore-forming); the sequence is SIFFAVTVVTTIGYGNPVPVT. A helical membrane pass occupies residues 295 to 315; the sequence is IWCILFSLLGIPLTLVTIADL. At 316 to 368 the chain is on the cytoplasmic side; sequence GKFLSEHLVWLYGNYLKLKYLILSRHRKERREHVCEHCHSHGMGHDMNIEEKR. The chain crosses the membrane as a helical span at residues 369-389; the sequence is IPAFLVLAILIVYTAFGGVLM. An intramembrane region (pore-forming) is located at residues 397–417; sequence FFTSFYWSFITMTTVGFGDLM. A helical membrane pass occupies residues 426 to 446; the sequence is IILLYIILGLAITTMCIDLVG. At 447–557 the chain is on the cytoplasmic side; the sequence is VQYIRKIHYF…SRYSLNRAFK (111 aa).

It belongs to the two pore domain potassium channel (TC 1.A.1.8) family.

Its subcellular location is the membrane. The protein is TWiK family of potassium channels protein 7 (twk-7) of Caenorhabditis elegans.